The sequence spans 396 residues: Jacalin-related lectin 45 (396 aa).

Jacalin-type lectin domains lie at Lys-3–His-138, Gln-144–Val-264, and Val-270–Pro-392.

This sequence belongs to the jacalin lectin family.

The sequence is that of Jacalin-related lectin 45 (JAL45) from Arabidopsis thaliana (Mouse-ear cress).